The chain runs to 153 residues: Transcriptional repressor NrdR (153 aa).

A zinc finger spans residues 3–34; that stretch reads CPSCQHHGTRVLDSRPVDEGRSIRRRRECEQC. One can recognise an ATP-cone domain in the interval 49–139; it reads LIVVKKQGMR…VYRQFKDLNV (91 aa).

Belongs to the NrdR family. Zn(2+) serves as cofactor.

Functionally, negatively regulates transcription of bacterial ribonucleotide reductase nrd genes and operons by binding to NrdR-boxes. The chain is Transcriptional repressor NrdR from Geobacillus sp. (strain WCH70).